The chain runs to 117 residues: uncharacterized protein (117 aa).

The next 4 helical transmembrane spans lie at 3–23 (AVPIILVFAAGLNSCIGNILL), 40–60 (FLTPGFVGGVVFYGINVLLFA), 66–86 (LEVSVAYPILAGSGFAMLIIA), and 94–114 (PFHLHKWIGVALVLVGIIFLA).

The protein to E.coli and S.aureus ethidium bromide resistance proteins (ebr/QacC/EmrE/MvrC).

The protein localises to the cell membrane. This is an uncharacterized protein from Sinorhizobium fredii (strain NBRC 101917 / NGR234).